Reading from the N-terminus, the 443-residue chain is Thymidine phosphorylase (443 aa).

This sequence belongs to the thymidine/pyrimidine-nucleoside phosphorylase family. Homodimer.

The catalysed reaction is thymidine + phosphate = 2-deoxy-alpha-D-ribose 1-phosphate + thymine. It participates in pyrimidine metabolism; dTMP biosynthesis via salvage pathway; dTMP from thymine: step 1/2. Functionally, the enzymes which catalyze the reversible phosphorolysis of pyrimidine nucleosides are involved in the degradation of these compounds and in their utilization as carbon and energy sources, or in the rescue of pyrimidine bases for nucleotide synthesis. In Sodalis glossinidius (strain morsitans), this protein is Thymidine phosphorylase.